The chain runs to 334 residues: Ferredoxin--NADP reductase (334 aa).

The FAD site is built by Asp33, Gln41, Tyr46, Ala86, Phe120, Asp286, and Thr327.

The protein belongs to the ferredoxin--NADP reductase type 2 family. Homodimer. FAD serves as cofactor.

The enzyme catalyses 2 reduced [2Fe-2S]-[ferredoxin] + NADP(+) + H(+) = 2 oxidized [2Fe-2S]-[ferredoxin] + NADPH. This is Ferredoxin--NADP reductase from Rickettsia typhi (strain ATCC VR-144 / Wilmington).